We begin with the raw amino-acid sequence, 447 residues long: ATP-dependent protease ATPase subunit HslU (447 aa).

ATP-binding positions include Ile18, 60–65 (GVGKTE), Asp260, Glu325, and Arg397.

The protein belongs to the ClpX chaperone family. HslU subfamily. In terms of assembly, a double ring-shaped homohexamer of HslV is capped on each side by a ring-shaped HslU homohexamer. The assembly of the HslU/HslV complex is dependent on binding of ATP.

Its subcellular location is the cytoplasm. ATPase subunit of a proteasome-like degradation complex; this subunit has chaperone activity. The binding of ATP and its subsequent hydrolysis by HslU are essential for unfolding of protein substrates subsequently hydrolyzed by HslV. HslU recognizes the N-terminal part of its protein substrates and unfolds these before they are guided to HslV for hydrolysis. This is ATP-dependent protease ATPase subunit HslU from Paraburkholderia phymatum (strain DSM 17167 / CIP 108236 / LMG 21445 / STM815) (Burkholderia phymatum).